The following is a 287-amino-acid chain: Mitochondrial glycine transporter B (287 aa).

3 Solcar repeats span residues 7 to 97 (HPAL…LKQH), 104 to 188 (PSAG…AKKA), and 198 to 282 (IAPL…LMAR). 6 helical membrane-spanning segments follow: residues 13-38 (FMCG…TRLQ), 72-98 (GVSP…KQHY), 110-135 (VLLG…TRFE), 163-186 (GLTA…SQAK), 202-228 (VNFG…KTHM), and 257-275 (GAVP…AWTV).

The protein belongs to the mitochondrial carrier (TC 2.A.29) family. SLC25A38 subfamily. As to expression, at 24 hours post-fertilization, expressed predominantly in posterior blood island, posterior cardinal vein and circulating blood. At 34 hours post-fertilization, becomes restricted to posterior blood island and circulating blood.

The protein localises to the mitochondrion inner membrane. It carries out the reaction glycine(in) = glycine(out). In terms of biological role, mitochondrial glycine transporter that imports glycine into the mitochondrial matrix. Plays an important role in providing glycine for the first enzymatic step in heme biosynthesis, the condensation of glycine with succinyl-CoA to produce 5-aminolevulinate (ALA) in the mitochondrial matrix. Required during erythropoiesis. Functionally, may play a role as pro-apoptotic protein that induces caspase-dependent apoptosis. The polypeptide is Mitochondrial glycine transporter B (slc25a38b) (Danio rerio (Zebrafish)).